The chain runs to 157 residues: Small ribosomal subunit protein uS7 (157 aa).

It belongs to the universal ribosomal protein uS7 family. Part of the 30S ribosomal subunit. Contacts proteins S9 and S11.

One of the primary rRNA binding proteins, it binds directly to 16S rRNA where it nucleates assembly of the head domain of the 30S subunit. Is located at the subunit interface close to the decoding center, probably blocks exit of the E-site tRNA. The chain is Small ribosomal subunit protein uS7 from Borreliella burgdorferi (strain ATCC 35210 / DSM 4680 / CIP 102532 / B31) (Borrelia burgdorferi).